The primary structure comprises 173 residues: MTASCPPPSTSEPSREEQARALCLRLLTARARTRAELHGRLAKRGYPDDVSTAVLDRLAAVGLIDDADFAQQWVQSRRAHAGKSKRALAAELHTKGVDNDVITSVLAGIDAGAERDRAEQLVRSKLRRETLAQDDARVTRRLVGMLARRGYSQNLACEVVLAELAAERERRRV.

Belongs to the RecX family.

The protein localises to the cytoplasm. Modulates RecA activity. The sequence is that of Regulatory protein RecX from Mycobacterium avium (strain 104).